The chain runs to 87 residues: Probable Fe(2+)-trafficking protein (87 aa).

This sequence belongs to the Fe(2+)-trafficking protein family. Monomer.

Could be a mediator in iron transactions between iron acquisition and iron-requiring processes, such as synthesis and/or repair of Fe-S clusters in biosynthetic enzymes. The protein is Probable Fe(2+)-trafficking protein of Buchnera aphidicola subsp. Baizongia pistaciae (strain Bp).